Consider the following 473-residue polypeptide: Aspartyl/glutamyl-tRNA(Asn/Gln) amidotransferase subunit B (473 aa).

It belongs to the GatB/GatE family. GatB subfamily. As to quaternary structure, heterotrimer of A, B and C subunits.

The catalysed reaction is L-glutamyl-tRNA(Gln) + L-glutamine + ATP + H2O = L-glutaminyl-tRNA(Gln) + L-glutamate + ADP + phosphate + H(+). The enzyme catalyses L-aspartyl-tRNA(Asn) + L-glutamine + ATP + H2O = L-asparaginyl-tRNA(Asn) + L-glutamate + ADP + phosphate + 2 H(+). Its function is as follows. Allows the formation of correctly charged Asn-tRNA(Asn) or Gln-tRNA(Gln) through the transamidation of misacylated Asp-tRNA(Asn) or Glu-tRNA(Gln) in organisms which lack either or both of asparaginyl-tRNA or glutaminyl-tRNA synthetases. The reaction takes place in the presence of glutamine and ATP through an activated phospho-Asp-tRNA(Asn) or phospho-Glu-tRNA(Gln). This chain is Aspartyl/glutamyl-tRNA(Asn/Gln) amidotransferase subunit B, found in Sulfurisphaera tokodaii (strain DSM 16993 / JCM 10545 / NBRC 100140 / 7) (Sulfolobus tokodaii).